Reading from the N-terminus, the 609-residue chain is UvrABC system protein C (609 aa).

A GIY-YIG domain is found at 15–92 (TGSGVYQMQD…IKQFRPRYNV (78 aa)). The 36-residue stretch at 202–237 (DQVIIKLTERMEVASENLVFEEAAHYRDQIRQLRRL) folds into the UVR domain.

Belongs to the UvrC family. As to quaternary structure, interacts with UvrB in an incision complex.

The protein resides in the cytoplasm. Functionally, the UvrABC repair system catalyzes the recognition and processing of DNA lesions. UvrC both incises the 5' and 3' sides of the lesion. The N-terminal half is responsible for the 3' incision and the C-terminal half is responsible for the 5' incision. The polypeptide is UvrABC system protein C (Coxiella burnetii (strain RSA 331 / Henzerling II)).